Consider the following 470-residue polypeptide: MQNLFRLLPPVDAVLTALGDDVGLAALPRAMLRDAVTAYLDGLRDDIRAGRLTEPAQLDHGLVFAQCARQVAAATRPHFRRVINATGVVVHTNLGRSLLAPEAAAAAADACLRYSNLEFDLATGERGSRYSHVVDILRTLTGAEDALVVNNNAAAVMIVLETLAKGREVIVSRGQLVEIGGSFRIPEVMAKSGAVLREVGATNRTHLRDYENAVSPETAALLKVHTSNYRIVGFTKEVSLAELAELGARLGLPVIEDLGSGNLTDFAACGLPGEPTVQQAVAEGADVVTFSGDKVLGGPQAGIIVGKAKYIAAIRKNPLNRAMRIDKMTLAALEATLRLYRDPERARAVIPTLAMITASPEALAKKARKLAGLLRKALAGRYAVSAIPGASRVGGGAYPERDLPTTLVALRPLTGAPSPDALRQRLLAADPPLVARTQDDALLLDPRTLADDELKLVATVLAQACQPETA.

N6-(pyridoxal phosphate)lysine is present on K294.

The protein belongs to the SelA family. The cofactor is pyridoxal 5'-phosphate.

Its subcellular location is the cytoplasm. The catalysed reaction is L-seryl-tRNA(Sec) + selenophosphate + H(+) = L-selenocysteinyl-tRNA(Sec) + phosphate. It functions in the pathway aminoacyl-tRNA biosynthesis; selenocysteinyl-tRNA(Sec) biosynthesis; selenocysteinyl-tRNA(Sec) from L-seryl-tRNA(Sec) (bacterial route): step 1/1. Converts seryl-tRNA(Sec) to selenocysteinyl-tRNA(Sec) required for selenoprotein biosynthesis. The protein is L-seryl-tRNA(Sec) selenium transferase of Solidesulfovibrio magneticus (strain ATCC 700980 / DSM 13731 / RS-1) (Desulfovibrio magneticus).